The following is a 261-amino-acid chain: tRNA (guanine-N(7)-)-methyltransferase (261 aa).

E75, E100, D127, and D150 together coordinate S-adenosyl-L-methionine. D150 is a catalytic residue. K154 serves as a coordination point for substrate. Residues 156–161 form an interaction with RNA region; that stretch reads RHNKRR. Substrate is bound by residues D186 and 223–226; that span reads THFE.

It belongs to the class I-like SAM-binding methyltransferase superfamily. TrmB family.

The enzyme catalyses guanosine(46) in tRNA + S-adenosyl-L-methionine = N(7)-methylguanosine(46) in tRNA + S-adenosyl-L-homocysteine. It participates in tRNA modification; N(7)-methylguanine-tRNA biosynthesis. Functionally, catalyzes the formation of N(7)-methylguanine at position 46 (m7G46) in tRNA. This Xanthomonas campestris pv. campestris (strain 8004) protein is tRNA (guanine-N(7)-)-methyltransferase.